Consider the following 348-residue polypeptide: Alcohol dehydrogenase 2 (348 aa).

At Ser-2 the chain carries N-acetylserine. A Zn(2+)-binding site is contributed by Cys-44. Residues His-45, Thr-46, and His-49 each coordinate NAD(+). 7 residues coordinate Zn(2+): His-67, Glu-68, Cys-98, Cys-101, Cys-104, Cys-112, and Cys-154. The NAD(+) site is built by Gly-181, Gly-182, Leu-183, Asp-202, and Lys-207. Residue Ser-213 is modified to Phosphoserine. Phe-222 contacts NAD(+). Thr-223 bears the Phosphothreonine mark. Glycyl lysine isopeptide (Lys-Gly) (interchain with G-Cter in ubiquitin) cross-links involve residues Lys-226 and Lys-234. Position 269 (Val-269) interacts with NAD(+). Ser-279 carries the phosphoserine modification. Lys-287 participates in a covalent cross-link: Glycyl lysine isopeptide (Lys-Gly) (interchain with G-Cter in ubiquitin). NAD(+) is bound by residues Ser-294 and Val-296. Ser-316 is modified (phosphoserine). Residue Lys-319 forms a Glycyl lysine isopeptide (Lys-Gly) (interchain with G-Cter in ubiquitin) linkage. Arg-341 contributes to the NAD(+) binding site.

The protein belongs to the zinc-containing alcohol dehydrogenase family. As to quaternary structure, homotetramer. Requires Zn(2+) as cofactor.

The protein resides in the cytoplasm. The catalysed reaction is a primary alcohol + NAD(+) = an aldehyde + NADH + H(+). It carries out the reaction a secondary alcohol + NAD(+) = a ketone + NADH + H(+). The enzyme catalyses ethanol + NAD(+) = acetaldehyde + NADH + H(+). It catalyses the reaction butan-1-ol + NAD(+) = butanal + NADH + H(+). The catalysed reaction is hexan-1-ol + NAD(+) = hexanal + NADH + H(+). Its function is as follows. Preferentially oxidative, glucose-repressed isozyme that catalyzes the conversion of ethanol to acetaldehyde. Main enzyme involved in ethanol consumption. Acts on a variety of primary unbranched aliphatic alcohols. Also produces ethanol from glucose, albeit less than ADH1. This Saccharomyces cerevisiae (strain ATCC 204508 / S288c) (Baker's yeast) protein is Alcohol dehydrogenase 2 (ADH2).